Reading from the N-terminus, the 152-residue chain is Ribosome maturation factor RimP (152 aa).

It belongs to the RimP family.

It is found in the cytoplasm. Its function is as follows. Required for maturation of 30S ribosomal subunits. The polypeptide is Ribosome maturation factor RimP (Paraburkholderia xenovorans (strain LB400)).